Consider the following 275-residue polypeptide: Phosphate import ATP-binding protein PstB (275 aa).

Residues 28-270 (MSAKNVSVFY…PREERTKDYI (243 aa)) enclose the ABC transporter domain. ATP is bound at residue 60–67 (GPSGCGKS).

The protein belongs to the ABC transporter superfamily. Phosphate importer (TC 3.A.1.7) family. In terms of assembly, the complex is composed of two ATP-binding proteins (PstB), two transmembrane proteins (PstC and PstA) and a solute-binding protein (PstS).

The protein localises to the cell inner membrane. It carries out the reaction phosphate(out) + ATP + H2O = ADP + 2 phosphate(in) + H(+). Part of the ABC transporter complex PstSACB involved in phosphate import. Responsible for energy coupling to the transport system. The sequence is that of Phosphate import ATP-binding protein PstB from Novosphingobium aromaticivorans (strain ATCC 700278 / DSM 12444 / CCUG 56034 / CIP 105152 / NBRC 16084 / F199).